A 156-amino-acid chain; its full sequence is ATP synthase subunit b', chloroplastic (156 aa).

Residues 20 to 42 (NGTLPLMALQFLTLMVLLNTIFY) form a helical membrane-spanning segment.

This sequence belongs to the ATPase B chain family. F-type ATPases have 2 components, F(1) - the catalytic core - and F(0) - the membrane proton channel. F(1) has five subunits: alpha(3), beta(3), gamma(1), delta(1), epsilon(1). F(0) has four main subunits: a(1), b(1), b'(1) and c(10-14). The alpha and beta chains form an alternating ring which encloses part of the gamma chain. F(1) is attached to F(0) by a central stalk formed by the gamma and epsilon chains, while a peripheral stalk is formed by the delta, b and b' chains.

Its subcellular location is the plastid. It is found in the chloroplast thylakoid membrane. F(1)F(0) ATP synthase produces ATP from ADP in the presence of a proton or sodium gradient. F-type ATPases consist of two structural domains, F(1) containing the extramembraneous catalytic core and F(0) containing the membrane proton channel, linked together by a central stalk and a peripheral stalk. During catalysis, ATP synthesis in the catalytic domain of F(1) is coupled via a rotary mechanism of the central stalk subunits to proton translocation. Functionally, component of the F(0) channel, it forms part of the peripheral stalk, linking F(1) to F(0). The b'-subunit is a diverged and duplicated form of b found in plants and photosynthetic bacteria. The sequence is that of ATP synthase subunit b', chloroplastic from Pyropia yezoensis (Susabi-nori).